Reading from the N-terminus, the 687-residue chain is DNA ligase (687 aa).

Residues aspartate 34–aspartate 38, serine 83–leucine 84, and glutamate 117 contribute to the NAD(+) site. Lysine 119 functions as the N6-AMP-lysine intermediate in the catalytic mechanism. NAD(+) contacts are provided by arginine 140, glutamate 182, lysine 298, and lysine 322. Cysteine 416, cysteine 419, cysteine 434, and cysteine 439 together coordinate Zn(2+). The BRCT domain maps to glutamate 609 to glutamate 687.

Belongs to the NAD-dependent DNA ligase family. LigA subfamily. The cofactor is Mg(2+). Mn(2+) serves as cofactor.

It carries out the reaction NAD(+) + (deoxyribonucleotide)n-3'-hydroxyl + 5'-phospho-(deoxyribonucleotide)m = (deoxyribonucleotide)n+m + AMP + beta-nicotinamide D-nucleotide.. Its function is as follows. DNA ligase that catalyzes the formation of phosphodiester linkages between 5'-phosphoryl and 3'-hydroxyl groups in double-stranded DNA using NAD as a coenzyme and as the energy source for the reaction. It is essential for DNA replication and repair of damaged DNA. This chain is DNA ligase, found in Anaeromyxobacter dehalogenans (strain 2CP-1 / ATCC BAA-258).